A 569-amino-acid polypeptide reads, in one-letter code: Probable protein phosphatase 2C BIPP2C1 (569 aa).

2 disordered regions span residues 166 to 212 and 251 to 279; these read GSSN…SSKV and SLDD…GSSI. The span at 174 to 183 shows a compositional bias: low complexity; the sequence is SEVGVESECG. The region spanning 329 to 564 is the PPM-type phosphatase domain; it reads AAMLPHPSKV…DDVTVVVSVV (236 aa). Mn(2+)-binding residues include aspartate 358, glycine 359, aspartate 488, and aspartate 555.

The protein belongs to the PP2C family. Mg(2+) serves as cofactor. The cofactor is Mn(2+).

The enzyme catalyses O-phospho-L-seryl-[protein] + H2O = L-seryl-[protein] + phosphate. It carries out the reaction O-phospho-L-threonyl-[protein] + H2O = L-threonyl-[protein] + phosphate. May play a role in responses to biotic and abiotic stresses. This is Probable protein phosphatase 2C BIPP2C1 (BIPP2C1) from Oryza sativa subsp. indica (Rice).